A 131-amino-acid chain; its full sequence is Glycine cleavage system H protein (131 aa).

A Lipoyl-binding domain is found at 24–106 (RVTVGISDHA…YGEGWMFVVE (83 aa)). Position 65 is an N6-lipoyllysine (lysine 65).

The protein belongs to the GcvH family. As to quaternary structure, the glycine cleavage system is composed of four proteins: P, T, L and H. (R)-lipoate is required as a cofactor.

The glycine cleavage system catalyzes the degradation of glycine. The H protein shuttles the methylamine group of glycine from the P protein to the T protein. The chain is Glycine cleavage system H protein from Stenotrophomonas maltophilia (strain K279a).